We begin with the raw amino-acid sequence, 7182 residues long: MSFVAGVAPQGARGKYRAELNTEKRTDHVSLKASLCDAGDLVLKISPWFMDGESAYKHVSEQLSKGSKLLFVPQTLKGFIRHLPGPRVYLVERLTGGTYSDPFMVNQLAYQNAAGEGVIGTTLQGKRVGMFFPFDADLVTGEFQFLLRKKGFGGNRFRDAPWDYNWTPYSDLMDALEADPCGKYSQSLLKKLVGGDFTPIDQYMCGKNGKPIAEFAALMASEGITKLADVEAEVKSRTDSDRYIVFKNKLYRIVWNVQRKDVAYSKQSAFTMNSIVQLDTMEDVPRHSFTIGSEIQVIAPSTAVQANGHLNLKQRLLYAFYGKQAVSEPNYIYHSAYVDCTSCGKGSWLTGNAVQGFACDCGAHYCANDVDLQSSGLVRKNAVLLTTCPCNKDGECKHTLPQLVSMMTDKCDVEVVGKTFILTYGGVIYAYMGCSGGTMHFIPRAKSCVSKIGDAIFTGCTGTWSKVCETANLFLERAQHAINFVNEFVLTETVVALLSGTTSSIEELRDLCRNATFEKVRDYLTPRGWIVTMGSYIEGVINVGAAGVCNAALNAPFIVLSGLGESFKKVAATPWKLCSSLRETLDHYADSITYRVFPYDIPCDVTDYTALLLDCAVLTGASAYFVARYVDEKVEQLTNLVFSSCQSAVAAFVQACMSTYKATAKFISDMFTLIKVVSERLYVYTSVGFVVVGDYSSQLLKQFMHILSKAMQLLHTTVSWAGSKLPSVVYNGRDSLVFPSGTYYCVSTQGRSLQDQFDLVIPGDLSKKQIGILEPTPNSTTVDKKINTNVVEVVVGQLEPTKEHSPELVVGDYVIISNKIFVRSVEDSETVFYPLCTDGKIVPTLFRLKGGAPPKGVKFGGEQTKEITAVRSVSVDYDVHPVLDALLAGSELATFTVEKDLPVKDFVDVVKDEVIELLSKLLRGYNVDGFDLEDFADTPCYVYNAEGDLAWSSTMTFSVNPVEEVEEECDDDYVEDEYLSEEMLVEEDENSWAAAVEAVIPMEDVQLDTLVAEIDVSEPADDVAEQASTEEVEVPSACVLEASQVANAAEVESCEAEVSSSIPLHEDANAAKANDCAEGMPALDSTETVSKLSVDTPVGDVTQDDATSSNATVISEDVHTATHSKGLVAVPEVVPEKALGTSVERMRSTSEWTVVETSLKQETAVIVKNDSSAKPQRVKKPKAENPLKNFKHIVLNNDVTLVFGDAIAVARATEDCILVNAANTHLKHGGGIAAAIDRASGGLVQAESDDYVNFYGPLNVGDSTLLKGHGLATGILHVVGPDARANQDIQLLKRCYKAFNKYPLVVSPLISAGIFCVEPRVSLEYLLSVVHTKTYVVVNSEKVYNDLAAPKPPTGLTYSHEGWRGIIRNAKSFGFTCFICTDQSANAKLLKGRGVDLTKKTQTVDGVKYYLYSSKDPLTDIITAANACKGICAMPIGYVTHGLDLAQAGQQVKKITVPYVCLLASKDQVPILNSDVAVQTPEQSFINTVIANGGYHCWHLVTGELIVKGVSYRKLLNWSDQTICYADNKFYVVKGQIALPFDSLEKCRTYLTSRAAQQKNVDVLVTIDGVNFRTVVLNNTTTYRVQLGSVFYKGSDISDTIPTEKMSGEAVYLADNLSEAEKAVLSEVYGTADTAFLHRYYSLLALVKKWKYTVHDGVKSLKLNSNNCYVNVTMLMLDMLKEIKFIVPALQAAYLKHKGGDSTEFIALIMAYGDCTYGEPDDASRLLHTILSKAELTTQAKMVWRQWCNVCGVQDTTTTGLKACIYVGMNSLDELHATHEECCQCGDVRKRQLVEHNAPWLLLSGLNEAKVMTPTSQSAGPDYTAFNVFQGVETSVGHYLHVRVKDNLLYKYDSGSLSKTSDMKCKMTDVYYPKQRYSADCNVVVYSLDGNTWADVDPDLSAFYMKDGKYFTKKPVIEYSPATILSGSVYTNSCLVGHDGTIGSDAISSSFNNLLGFDNSKPVSKKLTYSFFPDFEGDVILTEYSTYDPIYKNGAMLHGKPILWVNNSKFDSALNKFNRATLRQVYDIAPVTLENKYTVLQDNQIQQVEVEAPKEDAKPQSPVQVAEDIDNKLPIIKCKGLKKPFVKDGYSFVNDPQGVNVIDTLGIDDLRALYVDRNLRLIVLKENNWSALFNIHTVEKGDLSVIAASGSITRRVKILLGASSLFAQFASVTVNVTTAMGKALGRMTRNVITNTGIIGQGFALLKMLLILPFTFWKSKNQSTVKVEVGALRTAGIVTTNVVKQCASAAYDVLVVKFKRIDWKSTLRLLFLICTTGLLLSSLYYLFLFHQVLTSDVMLDGAEGMLATYRELRSYLGIHSLCDGMVEAYRNVSYDVNDFCSNRSALCNWCLIGQDSLTRYSAFQMIQTHVTSYVINIDWVWFVMEFALAYVLYTSTFNVLLLVVSSQYFFSYTGAFVNWRSYNYLVSGYFFCVTHIPLLGLVRIYNFLACLWFLRRFYNHVINGCKDTACLLCYKRNRLTRVEASTVVCGSKRTFYIVANGGTSFCCRHNWNCVDCDTAGIGNTFICEEVANDLTTSLRRLVKPTDKSHYYVESVTVKDSVVQLHYSREGASCYERYPLCYFTNLDKLKFKEVCKTPTGIPEHNFLIYDSSDRGQENLARSACVYYSQVLSKPMLLVDSNMVTTVGDSREIASKMLDSYVNSFISLFGVNRDKLDKLVATARDCVKRGDDFQTVIKTFTDAARGPAGVESDVETSSIVDALQYAYKHDLQLTTEGFNNYVPSYIKPDSVATADLGCLIDLNAASVNQTSIRNANGACIWNSSDYMKLSDSLKRQIRIACRKCNIPFRLTTSRLRSADNILSVKFSATKLSGGAPKWLLKLRDFTWKSYCVVTLVVFAMAVLSYLCLPAFNMSQVSFHEDRILTYKVVENGIIRDITPSDTCFANKYQSFSKWFNEHYGGLFNNDISCPVTVAVIAGVAGARVPNLPANVAWVGRQIVLFVSRVFASSNNVCYTPTAEIPYERFSDSGCVLASECTLFRDAEGKINPYCYDPTVLPGASAYDQMKPHVRYDMYDSDMYIKFPEVVFESTLRITKTLATRYCRFGSCEDANEGVCITTNGSWAIYNDHYANKPGVYCGDNYFDIVRRLGLSLFQPVTYFQLSTSLALGVMLCIFLTIAFYYVNKVKRALADYTQCAVVAVAAALLNSLCLCFVVSNPLLVLPYTALYYYATFYLTGEPAFVMHVSWFVMFGTVVPIWMVFAYIVGVCLRHLLWVMAYFSKKHVEVFTDGKLNCSFQDAAANIFVINKDTYVALRNSITQDSYNRYLSMFNKYKYYSGAMDTASYREASAAHLCKALQVYSETGSDVLFQPPNCSVTSSVLQSGLVKMAAPSGVVENCMVQVTCGSMTLNGLWLDNYVWCPRHVMCPADQLSDPNYDALLVSKTNLSFIVQKNVGAPANLRVVGHTMVGTLLKLTVESANPQTPAYTFTTVKPGASFSVLACYNGRPTGVFMVNMRQNSTIKGSFLCGSCGSVGYTQEGNVINFCYMHQMELSNGTHTGCAFDGVMYGAFEDRQVHQVQLSDKYCTINIVAWLYAAILNGCNWFVKPNKTGIATFNEWAMSNQFTEFIGTQSVDMLAHKTGVSVEQLLYAIQTLHKGFQGKTILGNSMLEDEFTPDDVNMQVMGVVMQSGVKRISYGLVHWLFTTLLLAYVATLQLTKFTIWNYLFEVIPLQLTPLVLCVMACVMLTVKHKHTFLTLFLLPTAICLTYANIVYEPQTPVSSALIAVANWLNPASVYMRTTHTDLGVYLSLCFALAVVVRRLYRPNASNLALALGSAMVWFYTYTTGDCSSPLTYLMFLTTLTSDYTVTVFLAVNVAKFFARVVFLYAPHAGFIFPEVKLVLLMYLAVGYFCTVYFGVFSLLNLKLRVPLGVYDYTVSTQEFRYLTGNGLHAPRNSWEALRLNMKLIGIGGTPCIKIASVQSKLTDLKCTSVVLLSVLQQLHLEANSKAWAHCVKLHNDILAATDPTEAFDNFVCLFATLMSFSANVDLEALASDLLDHPSVLQATLSEFSHLASYAELEAAQSSYQKALNSGDASPQVLKALQKAVNIAKNAYEKDKAVARKLERMAEQAMTSMYKQARAEDKKAKIVSAMQTMLFGMIKKLDNDVLNGVISNARNGCVPLSVVPLCASNKLRVVIPDITIWNKVVTWPSLSYAGALWDISLINNVDGEVVKSSDVTETNESLTWPLVLECTRAASSAVTLQNNEIRPSGLKTMVVSAGIDHANCNTSSLAYYEPVEGRKMLMGILSENAHLKWAKVEGRDGFVNIELQPPCKFLIAGPKGPEVRYLYFVKNLNNLHRGQLLGHIAATVRLQAGSNTEFAINSSVLSAVTFSVDPGKAYLDFVNAGGAPLTNCVKMLTPKTGTGIAVSVKPEANADQDTYGGASVCLYCRAHIEHPDVTGVCKFKGKFVQVPLHIRDPVGFCLQNTPCNVCQFWIGHGCNCDALRGTTIPQSKDSNFLNRVRGSIVNARIEPCASGLTTDVVFRAFDICNYKAKVAGIGKYYKTNTCRFVEVDDEGHRLDSFFVVKRHTMENYELEKRCYDLVKDCDAVAVHDFFIFDVDKVKTPHIVRQRLTEYTMMDLVYALRHFDQNNCEVLKSILVKYGCCDASYFDNKLWFDFVENPNVISVYHKLGERIRQAVLNTVKFCDQMVKSGLVGVLTLDNQDLNGKWYDFGDFVITQPGAGVAIVDSYYSYLMPVLSMTNCLAAETHRDCDLTKPLIEWPLLEYDYTDYKIGLFEKYFKXWDQQYHPNCVNCTDDRCVLHCANFNVLFSMTLPGTSFGPIVRKIFVDGVPFVISCGYHYKELGLVMNMDVSLHRHRLSLKELMMYAADPAMHIASASALWDLRTPCFSVAALTTGLTFQTVRPGNFNKDFYDFVVSKGFFKEGSSVTLRHFFFAQDGHAAITDYSYYAYNLPTMCDIKQMLFCMEVVDRYFEIYDGGCLNASEVIVNNLDKSAGHPFNKFGKARVYYESLSYQEQDELFAMTKRNVLPTITQMNLKYAISAKNRARTVAGVSILSTMTNRQYHQKMLKSMAATRGSTCVIGTTKFYGGWDFMLKTLYKDVDNPHLMGWDYPKCDRAMPNMCRIFASLILARKHSTCCTNTDRFYRLANECAQVLSEYVLCGGGYYVKPGGTSSGDATTAYANSVFNILQATTANVSALMGANGNTIVDEEVKDMQFELYVNVYRKSQPDPKFVDRYYAFLNKHFSMMILSDDGVVCYNSDYATKGYIASIQNFKETLYYQNNVFMSEAKCWVETDLKKGPHEFCSQHTLFIKDGDDGYFLPYPDPSRILSAGCFVDDIVKTDGTLMVERFVSLAIDAYPLTKHDDPEYQNVFWVYLQYIEKLYKDLTGHMLDSYSVMLCGDNSAKFWEESFYRDLYTAPTTLQAVGSCVVCHSQTSLRCGTCIRRPFLCCKCCYDHVIATPHKMVLSVSPYVCNAPGCDVADVTKLYLGGMSYFCIDHRPVCSFPLCANGLVFGLYKNMCTGSPSVTEFNRLATCDWTESGDYTLANTTTEPLKLFAAETLRATEEASKQSYAIATIKEIVGERELLLVWEAGKAKPPLNRNYVFTGYHITKNSKVQLGEYVFERIDYSDAVSYKSSTTYKLAVGDIFVLTSHSVATLQAPTIVNQERYVKITGLYPTLTVPEEFANHVANFQKAGFSKFVTVQGPPGTGKSHFAIGLAIYYPTARVVYTACSHAAVDALCEKAFKYLNIAKCSRIIPAKARVECYDQFKVNETNSQYLFSTINALPETSADILVVDEVSMCTNYDLSVINARIKAKHIVYVGDPAQLPAPRTLLTRGTLEPENFNSVTRLMCNLGPDIFLSVCYRCPEEIVNTVSALVYNNKLVAKKPASGQCFKILYKGSVTHDASSAINRPQLNFVKSFIAANPNWSKAVFISPYNSQNAVARSVLGLTTQTVDSSQGSEYPYVIFCQTADTAHANNINRFNVAVTRAQKGILCVMTSQALFDSLEFAEVSLNNYKLQSQIVTGLYKDCSRESSGLHPAYAPTYVSVDDKYKTSDELCVNLNVPANVPYSRVISRMGFKLDASIPNYPKLFITRDEAIRQVRSWIGFDVEGAHASRNACGTNVPLQLGFSTGVNFVVQPVGVVDTEWGSMLTSIAARPPPGEQFKHLVPLMNKGAAWPIVRRRIVQMLSDTLDKLSDYCTFVCWAHGFELTSASYFCKIGKEQRCCMCNRRASTYSSPLHSYACWSHSSGYDYVYNPFFVDVQQWGYIGNLATNHDRYCSVHQGAHVASNDAVMTRCLAIHDCFIERVEWDITYPYISHEKRLNSCCRAVERNVVRAALLAGRFERVYDIGNPKGIPIVDDPVVDWHYYDAQPLSKKVQQLFYTEDCAKNFSDGLCLFWNCNVPRYPNNAIVCRFDTRVHSEFNLPGCDGGSLYVNKHAFHTPAYDASAFRDLKPLPFFYYSTTPCEVHGNGNMLEDIDYVPLKSAVCITACNLGGAVCRKHAAEYRDYMEAYNLVSASGFRLWCYKTFDVYNLWSTFTKIQGLENIAYNVIKQGHFTGVEGELPVAVVNDKIYTKSDVNDVCIFENKTTLPTNIAFELYAKRAVRSHPDFNLLRNLEVDVCYKFVLWDYERSNIYGSATIGVCKYTDIDVNSALNICFDIRDNGSLERFMSLPNGILISDRKVKNYPCIVSSNYAYFNGTLIRDNTGNSQSSDGEVKQPVTFYIYKKVNNEFVQFTDTYYTLGRTVSDFTPVSEMEKDFLALDSDVFIKKYKLEAYAFEHVVYGDFSRTTLGGLHLLIGLYKKHQEGHIIMEEMLKERATVHNYFVTESNTASFKAVCSVIDLKLDDFVDIIKAMDLSVVSKVVKIPIDLTMIEFMLWCKDGQVQTFYPRLQAINDWKPGLAMPSLFKVQNSNLEPCMLPNYKQSIPMPQGVHMNIAKYMQLCQYLNTCTIAVPANMRVMHFGAGSDKGVAPGSSVLRQWLPTDAILIDNDLNEYVSDADITLFGDCVTVRVGQQVDLLISDMYDPSTKVVGETNEAKALFFVYLCNFIKNNLALGGSVAIKITEHSWSAELYELMGRFAWWTVFCTNANASSSEGFLIGINYLGELKEVIDGNVMHANYIFWRNTTLMNLSTYSLFDLSRFPLKLKGTPVLQLKESQINELVISLLSQGKLIIRDNDTLSVSTDVLVNFYRKPHKRSKC.

A CoV Nsp1 globular domain is found at 25-151; it reads RTDHVSLKAS…EFQFLLRKKG (127 aa). Positions 159-195 constitute a BetaCoV Nsp1 C-terminal domain; sequence DAPWDYNWTPYSDLMDALEADPCGKYSQSLLKKLVGG. The 277-residue stretch at 197–473 folds into the CoV Nsp2 N-terminal domain; it reads FTPIDQYMCG…WSKVCETANL (277 aa). Zn(2+)-binding residues include C340, C343, C359, and C361. The C4 stretch occupies residues 340 to 361; it reads CTSCGKGSWLTGNAVQGFACDC. The 235-residue stretch at 479–713 folds into the CoV Nsp2 middle domain; it reads QHAINFVNEF…MHILSKAMQL (235 aa). One can recognise a CoV Nsp2 C-terminal domain in the interval 715–851; sequence HTTVSWAGSK…VPTLFRLKGG (137 aa). The region spanning 855–964 is the Ubiquitin-like 1 domain; sequence KGVKFGGEQT…MTFSVNPVEE (110 aa). Macro domains lie at 1186 to 1345 and 1354 to 1480; these read PLKN…KVYN and TGLT…AVQT. The DPUP domain occupies 1480–1553; it reads TPEQSFINTV…LEKCRTYLTS (74 aa). The Ubiquitin-like 2 domain occupies 1558–1613; sequence QKNVDVLVTIDGVNFRTVVLNNTTTYRVQLGSVFYKGSDISDTIPTEKMSGEAVYL. Positions 1628–1902 constitute a Peptidase C16 domain; the sequence is VYGTADTAFL…WADVDPDLSA (275 aa). The active-site For PL-PRO activity is C1668. Residues C1748, C1751, C1783, and C1785 each coordinate Zn(2+). The C4-type zinc-finger motif lies at 1748–1785; that stretch reads CNVCGVQDTTTTGLKACIYVGMNSLDELHATHEECCQC. Active-site for PL-PRO activity residues include H1838 and D1853. Residues 1916 to 2033 form the Nucleic acid-binding domain; sequence VIEYSPATIL…QVYDIAPVTL (118 aa). A G2M domain is found at 2059-2179; the sequence is PQSPVQVAED…ASVTVNVTTA (121 aa). 3 helical membrane-spanning segments follow: residues 2158–2178, 2196–2216, and 2268–2288; these read ILLG…NVTT, GIIG…FTFW, and LLFL…LFLF. The HD1 stretch occupies residues 2158-2441; that stretch reads ILLGASSLFA…VTHIPLLGLV (284 aa). Positions 2305–2371 constitute a 3Ecto domain; that stretch reads LATYRELRSY…FQMIQTHVTS (67 aa). Disulfide bonds link C2321/C2349 and C2339/C2346. A run of 3 helical transmembrane segments spans residues 2372–2392, 2396–2416, and 2421–2441; these read YVIN…YVLY, FNVL…GAFV, and YNYL…LGLV. The tract at residues 2455–2545 is Y1; that stretch reads RFYNHVINGC…SLRRLVKPTD (91 aa). The region spanning 2455–2828 is the CoV Nsp3 Y domain; it reads RFYNHVINGC…LSVKFSATKL (374 aa). Positions 2459, 2464, 2469, 2472, 2505, 2508, 2512, and 2515 each coordinate Zn(2+). Positions 2459-2472 are ZF1; the sequence is HVINGCKDTACLLC. Positions 2505–2515 are ZF2; the sequence is CCRHNWNCVDC. The Y2 stretch occupies residues 2546–2644; it reads KSHYYVESVT…LVDSNMVTTV (99 aa). A coV-Y region spans residues 2546–2828; that stretch reads KSHYYVESVT…LSVKFSATKL (283 aa). A Y3 region spans residues 2645 to 2727; that stretch reads GDSREIASKM…DALQYAYKHD (83 aa). The segment at 2728–2828 is Y4; the sequence is LQLTTEGFNN…LSVKFSATKL (101 aa). Transmembrane regions (helical) follow at residues 2848-2868, 3119-3139, 3152-3172, and 3203-3223; these read CVVT…LPAF, STSL…FYYV, CAVV…FVVS, and WFVM…IVGV. Residues 2848–3223 are HD2; the sequence is CVVTLVVFAM…WMVFAYIVGV (376 aa). The Nsp4C domain maps to 3242-3338; sequence VFTDGKLNCS…NCSVTSSVLQ (97 aa). The Peptidase C30 domain maps to 3339–3644; the sequence is SGLVKMAAPS…NMQVMGVVMQ (306 aa). Catalysis depends on for 3CL-PRO activity residues H3379 and C3486. A run of 7 helical transmembrane segments spans residues 3650-3670, 3684-3704, 3709-3729, 3760-3777, 3782-3802, 3823-3843, and 3855-3875; these read ISYG…VATL, VIPL…MLTV, TFLT…NIVY, LGVY…VRRL, ASNL…YTTG, VTVF…FLYA, and LVLL…GVFS. The tract at residues 3650–3875 is HD3; the sequence is ISYGLVHWLF…FCTVYFGVFS (226 aa). Residues 3937–4019 form the RdRp Nsp7 cofactor domain; sequence SKLTDLKCTS…DLLDHPSVLQ (83 aa). A RdRp Nsp8 cofactor domain is found at 4020 to 4218; it reads ATLSEFSHLA…RAASSAVTLQ (199 aa). In terms of domain architecture, Nsp9 ssRNA-binding spans 4219–4328; sequence NNEIRPSGLK…GHIAATVRLQ (110 aa). The ExoN/MTase coactivator domain maps to 4329-4467; that stretch reads AGSNTEFAIN…DALRGTTIPQ (139 aa). Zn(2+) contacts are provided by C4402, C4405, H4411, C4418, C4444, C4447, C4455, and C4457. Zinc fingers lie at residues 4402–4418 and 4444–4457; these read CLYC…TGVC and CNVC…GCNC. The NiRAN domain maps to 4473-4730; that stretch reads FLNRVRGSIV…AAETHRDCDL (258 aa). The Mn(2+) site is built by N4678 and D4687. Residues 4735–4833 form the Nsp12 Interface domain; it reads IEWPLLEYDY…MNMDVSLHRH (99 aa). Zn(2+) contacts are provided by H4764, C4770, C4775, C4779, and C4956. The region spanning 4834-5401 is the Nsp12 RNA-dependent RNA polymerase domain; the sequence is RLSLKELMMY…DLYTAPTTLQ (568 aa). Residues 4836-5050 are rdRp Fingers N-ter; that stretch reads SLKELMMYAA…HQKMLKSMAA (215 aa). Residues 5051–5089 are rdRp Palm N-ter; that stretch reads TRGSTCVIGTTKFYGGWDFMLKTLYKDVDNPHLMGWDYP. Positions 5081–5243 constitute a RdRp catalytic domain; that stretch reads PHLMGWDYPK…CYNSDYATKG (163 aa). Residues 5090 to 5148 form a rdRp Fingers C-ter region; it reads KCDRAMPNMCRIFASLILARKHSTCCTNTDRFYRLANECAQVLSEYVLCGGGYYVKPGG. Zn(2+)-binding residues include H5111, C5114, and C5115. Residues 5149 to 5284 form a rdRp Palm C-ter region; the sequence is TSSGDATTAY…KKGPHEFCSQ (136 aa). Residues S5228, D5229, and D5230 contribute to the active site. The segment at 5285-5401 is rdRp Thumb; that stretch reads HTLFIKDGDD…DLYTAPTTLQ (117 aa). One can recognise a CV ZBD domain in the interval 5402 to 5514; that stretch reads AVGSCVVCHS…TEFNRLATCD (113 aa). Zn(2+) contacts are provided by C5406, C5409, C5417, C5420, C5427, C5430, H5434, H5440, C5451, C5456, C5473, and H5476. Positions 5658 to 5839 constitute a (+)RNA virus helicase ATP-binding domain; it reads TVPEEFANHV…MCNLGPDIFL (182 aa). ATP is bound at residue 5683-5690; the sequence is GPPGTGKS. Residues 5840-6014 form the (+)RNA virus helicase C-terminal domain; that stretch reads SVCYRCPEEI…GLYKDCSRES (175 aa). The region spanning 6071–6286 is the ExoN domain; the sequence is LFITRDEAIR…RCLAIHDCFI (216 aa). Residues D6089, E6091, and E6190 contribute to the active site. Positions 6206, 6209, 6225, 6228, 6256, 6260, and 6263 each coordinate Zn(2+). Residues H6267 and D6272 contribute to the active site. A Zn(2+)-binding site is contributed by C6278. The N7-MTase domain maps to 6295 to 6523; that stretch reads YPYISHEKRL…NLWSTFTKIQ (229 aa). Residue 6330-6336 participates in S-adenosyl-L-methionine binding; sequence DIGNPKG. Residues 6409–6423 form a gpppA-binding region; it reads CDGGSLYVNKHAFHT. 4 residues coordinate Zn(2+): C6447, C6469, C6480, and H6483. Residues 6524 to 6584 form the Nsp15 N-terminal oligomerization domain; sequence GLENIAYNVI…NIAFELYAKR (61 aa). The AV-Nsp11N/CoV-Nsp15M domain maps to 6585-6715; sequence AVRSHPDFNL…IYKKVNNEFV (131 aa). Residues 6732 to 6871 enclose the NendoU domain; that stretch reads TPVSEMEKDF…KDGQVQTFYP (140 aa). Catalysis depends on residues H6762, H6777, K6817, K6920, D7004, K7044, and E7077. Positions 6876 to 7170 constitute a Nidovirus-type SAM-dependent 2'-O-MTase domain; the sequence is INDWKPGLAM…TLSVSTDVLV (295 aa).

The protein belongs to the coronaviruses polyprotein 1ab family. In terms of assembly, interacts with host PHB and PHB2. As to quaternary structure, interacts with papain-like protease nsp3 and non-structural protein 6. Monomer. Homodimer. Only the homodimer shows catalytic activity. In terms of assembly, interacts with nsp8 and nsp12 to form the replication-transcription complex (RTC): nsp12, nsp7, two subunits of nsp8, and up to two subunits of nsp13. As to quaternary structure, interacts with nsp7, nsp13 and nsp12 to form the replication-transcription complex (RTC): nsp12, nsp7, two subunits of nsp8, and up to two subunits of nsp13. Interacts with nsp12. In terms of assembly, interacts with proofreading exoribonuclease nsp14 and 2'-O-methyltransferase nsp16; these interactions enhance nsp14 and nsp16 enzymatic activities. As to quaternary structure, interacts with nsp7 and nsp8 to form the replication-transcription complex (RTC): nsp12, nsp7, two subunits of nsp8, and up to two subunits of nsp13. Interacts with nsp9. Interacts with nsp8 to form the replication-transcription complex (RTC): nsp12, nsp7, two subunits of nsp8, and up to two subunits of nsp13. Mn(2+) is required as a cofactor. Requires Mg(2+) as cofactor. Post-translationally, specific enzymatic cleavages in vivo by its own proteases yield mature proteins. 3CL-PRO and PL-PRO proteinases are autocatalytically processed.

It is found in the host membrane. The protein resides in the host cytoplasm. It localises to the host perinuclear region. The protein localises to the host endoplasmic reticulum-Golgi intermediate compartment. It catalyses the reaction RNA(n) + a ribonucleoside 5'-triphosphate = RNA(n+1) + diphosphate. The enzyme catalyses ATP + H2O = ADP + phosphate + H(+). It carries out the reaction Thiol-dependent hydrolysis of ester, thioester, amide, peptide and isopeptide bonds formed by the C-terminal Gly of ubiquitin (a 76-residue protein attached to proteins as an intracellular targeting signal).. The catalysed reaction is a 5'-end (N(7)-methyl 5'-triphosphoguanosine)-ribonucleoside in mRNA + S-adenosyl-L-methionine = a 5'-end (N(7)-methyl 5'-triphosphoguanosine)-(2'-O-methyl-ribonucleoside) in mRNA + S-adenosyl-L-homocysteine + H(+). It catalyses the reaction uridylyl-uridylyl-ribonucleotide-RNA = a 3'-end uridylyl-2',3'-cyclophospho-uridine-RNA + a 5'-end dephospho-ribonucleoside-RNA. The enzyme catalyses a 5'-end diphospho-ribonucleoside in mRNA + GTP + H(+) = a 5'-end (5'-triphosphoguanosine)-ribonucleoside in mRNA + diphosphate. It carries out the reaction a 5'-end (5'-triphosphoguanosine)-ribonucleoside in mRNA + S-adenosyl-L-methionine = a 5'-end (N(7)-methyl 5'-triphosphoguanosine)-ribonucleoside in mRNA + S-adenosyl-L-homocysteine. Its function is as follows. The replicase polyprotein of coronaviruses is a multifunctional protein: it contains the activities necessary for the transcription of negative stranded RNA, leader RNA, subgenomic mRNAs and progeny virion RNA as well as proteinases responsible for the cleavage of the polyprotein into functional products. Functionally, inhibits host translation by interacting with the 40S ribosomal subunit. The nsp1-40S ribosome complex further induces an endonucleolytic cleavage near the 5'UTR of host mRNAs, targeting them for degradation. Viral mRNAs are not susceptible to nsp1-mediated endonucleolytic RNA cleavage thanks to the presence of a 5'-end leader sequence and are therefore protected from degradation. By suppressing host gene expression, nsp1 facilitates efficient viral gene expression in infected cells and evasion from host immune response. In terms of biological role, may play a role in the modulation of host cell survival signaling pathway by interacting with host PHB and PHB2. Indeed, these two proteins play a role in maintaining the functional integrity of the mitochondria and protecting cells from various stresses. Responsible for the cleavages located at the N-terminus of the replicase polyprotein. In addition, PL-PRO possesses a deubiquitinating/deISGylating activity and processes both 'Lys-48'- and 'Lys-63'-linked polyubiquitin chains from cellular substrates. Participates together with nsp4 in the assembly of virally-induced cytoplasmic double-membrane vesicles necessary for viral replication. Antagonizes innate immune induction of type I interferon by blocking the phosphorylation, dimerization and subsequent nuclear translocation of host IRF3. Also prevents host NF-kappa-B signaling. Its function is as follows. Participates in the assembly of virally-induced cytoplasmic double-membrane vesicles necessary for viral replication. Functionally, cleaves the C-terminus of replicase polyprotein at 11 sites. Recognizes substrates containing the core sequence [ILMVF]-Q-|-[SGACN]. Also able to bind an ADP-ribose-1''-phosphate (ADRP). In terms of biological role, plays a role in the initial induction of autophagosomes from host endoplasmic reticulum. Later, limits the expansion of these phagosomes that are no longer able to deliver viral components to lysosomes. Forms a hexadecamer with nsp8 (8 subunits of each) that may participate in viral replication by acting as a primase. Alternatively, may synthesize substantially longer products than oligonucleotide primers. Its function is as follows. Forms a hexadecamer with nsp7 (8 subunits of each) that may participate in viral replication by acting as a primase. Alternatively, may synthesize substantially longer products than oligonucleotide primers. Functionally, forms a primer, NSP9-pU, which is utilized by the polymerase for the initiation of RNA chains. Interacts with ribosome signal recognition particle RNA (SRP). Together with NSP8, suppress protein integration into the cell membrane, thereby disrupting host immune defenses. In terms of biological role, plays a pivotal role in viral transcription by stimulating both nsp14 3'-5' exoribonuclease and nsp16 2'-O-methyltransferase activities. Therefore plays an essential role in viral mRNAs cap methylation. RNA-directed RNA polymerase that catalyzes the transcription of viral genomic and subgenomic RNAs. Acts in complex with nsp7 and nsp8 to transcribe both the minus and positive strands of genomic RNA. The kinase-like NiRAN domain of NSP12 attaches one or more nucleotides to the amino terminus of NSP9, forming a covalent RNA-protein intermediate that serves as transcription/replication primer. Subgenomic RNAs (sgRNAs) are formed by discontinuous transcription: The polymerase has the ability to pause at transcription-regulating sequences (TRS) and jump to the leader TRS, resulting in a major deletion. This creates a series of subgenomic RNAs that are replicated, transcribed and translated. In addition, Nsp12 is a subunit of the viral RNA capping enzyme that catalyzes the RNA guanylyltransferase reaction for genomic and sub-genomic RNAs. Subsequently, the NiRAN domain transfers RNA to GDP, and forms the core cap structure GpppA-RNA. Its function is as follows. Multi-functional protein with a zinc-binding domain in N-terminus displaying RNA and DNA duplex-unwinding activities with 5' to 3' polarity. Activity of helicase is dependent on magnesium. Functionally, plays a role in viral RNA synthesis through two distinct activities. The N7-guanine methyltransferase activity plays a role in the formation of the cap structure GpppA-RNA. The proofreading exoribonuclease reduces the sensitivity of the virus to RNA mutagens during replication. This activity acts on both ssRNA and dsRNA in a 3'-5' direction. In terms of biological role, plays a role in viral transcription/replication and prevents the simultaneous activation of host cell dsRNA sensors, such as MDA5/IFIH1, OAS, and PKR. Acts by degrading the 5'-polyuridines generated during replication of the poly(A) region of viral genomic and subgenomic RNAs. Catalyzes a two-step reaction in which a 2'3'-cyclic phosphate (2'3'-cP) is first generated by 2'-O transesterification, which is then hydrolyzed to a 3'-phosphate (3'-P). If not degraded, poly(U) RNA would hybridize with poly(A) RNA tails and activate host dsRNA sensors. Methyltransferase that mediates mRNA cap 2'-O-ribose methylation to the 5'-cap structure of viral mRNAs. N7-methyl guanosine cap is a prerequisite for binding of nsp16. Therefore plays an essential role in viral mRNAs cap methylation which is essential to evade immune system. The protein is Replicase polyprotein 1ab (rep) of Pipistrellus abramus (Japanese pipistrelle).